A 419-amino-acid polypeptide reads, in one-letter code: Histidine--tRNA ligase (419 aa).

It belongs to the class-II aminoacyl-tRNA synthetase family. In terms of assembly, homodimer.

The protein resides in the cytoplasm. It catalyses the reaction tRNA(His) + L-histidine + ATP = L-histidyl-tRNA(His) + AMP + diphosphate + H(+). The chain is Histidine--tRNA ligase from Thiobacillus denitrificans (strain ATCC 25259 / T1).